The chain runs to 79 residues: Acyl carrier protein (79 aa).

The region spanning 3-78 (QEILEKVCSI…DAVKFIEEKK (76 aa)) is the Carrier domain. S38 bears the O-(pantetheine 4'-phosphoryl)serine mark.

Belongs to the acyl carrier protein (ACP) family. 4'-phosphopantetheine is transferred from CoA to a specific serine of apo-ACP by AcpS. This modification is essential for activity because fatty acids are bound in thioester linkage to the sulfhydryl of the prosthetic group.

It is found in the cytoplasm. It functions in the pathway lipid metabolism; fatty acid biosynthesis. Carrier of the growing fatty acid chain in fatty acid biosynthesis. In Prochlorococcus marinus (strain MIT 9312), this protein is Acyl carrier protein.